Reading from the N-terminus, the 92-residue chain is uncharacterized protein (92 aa).

This is an uncharacterized protein from Dictyostelium discoideum (Social amoeba).